Consider the following 210-residue polypeptide: 7-carboxy-7-deazaguanine synthase (210 aa).

Substrate-binding positions include 12 to 14 and R27; that span reads LQG. The Radical SAM core domain occupies 18–210; sequence QAGRAAVFCR…LQTHKYIGIP (193 aa). C31, C46, and C49 together coordinate [4Fe-4S] cluster. T51 is a binding site for Mg(2+). T90 is a binding site for substrate. S-adenosyl-L-methionine contacts are provided by residues G92, 133-135, and 173-176; these read SPK and QPMD. P210 is a binding site for substrate.

The protein belongs to the radical SAM superfamily. 7-carboxy-7-deazaguanine synthase family. In terms of assembly, homodimer. It depends on [4Fe-4S] cluster as a cofactor. Requires S-adenosyl-L-methionine as cofactor. Mg(2+) serves as cofactor.

It carries out the reaction 6-carboxy-5,6,7,8-tetrahydropterin + H(+) = 7-carboxy-7-deazaguanine + NH4(+). It participates in purine metabolism; 7-cyano-7-deazaguanine biosynthesis. Catalyzes the complex heterocyclic radical-mediated conversion of 6-carboxy-5,6,7,8-tetrahydropterin (CPH4) to 7-carboxy-7-deazaguanine (CDG), a step common to the biosynthetic pathways of all 7-deazapurine-containing compounds. The protein is 7-carboxy-7-deazaguanine synthase of Bordetella pertussis (strain Tohama I / ATCC BAA-589 / NCTC 13251).